The following is a 328-amino-acid chain: Nuclear transcription factor Y subunit A-8 (328 aa).

Residues Lys-54–Arg-86 form a disordered region. The span at Ser-57–Asp-75 shows a compositional bias: low complexity. Polar residues predominate over residues Val-76–Arg-86. The Subunit association domain (SAD) signature appears at Phe-175–Asn-198. A DNA-binding region (NFYA/HAP2-type) is located at residues Lys-205–Thr-230.

Belongs to the NFYA/HAP2 subunit family. Heterotrimeric transcription factor composed of three components, NF-YA, NF-YB and NF-YC. NF-YB and NF-YC must interact and dimerize for NF-YA association and DNA binding. As to expression, expressed in the whole plant, except roots.

It is found in the nucleus. In terms of biological role, stimulates the transcription of various genes by recognizing and binding to a CCAAT motif in promoters. The protein is Nuclear transcription factor Y subunit A-8 (NFYA8) of Arabidopsis thaliana (Mouse-ear cress).